Here is a 167-residue protein sequence, read N- to C-terminus: Zinc finger CCCH domain-containing protein 3 (167 aa).

The segment at Ala-63–Pro-91 adopts a C3H1-type zinc-finger fold. Positions Pro-89–Ser-101 are enriched in pro residues. Residues Pro-89–Gly-167 are disordered. Positions Met-108–Asn-120 are enriched in polar residues. Pro residues predominate over residues Ser-149 to Gly-167.

The chain is Zinc finger CCCH domain-containing protein 3 from Oryza sativa subsp. japonica (Rice).